Reading from the N-terminus, the 426-residue chain is MAPSAEILCIGTELLLGQIVNTNAQFLAVELAKLGIPHHFQTVVGDNPGRIRLALDIAIERAGIILTTGGLGPTDDDLTHQTLAEHFEVPLVRHPALLALIEERFRERNRPMSPTNAKQADLPEGAQILPNPMGTAPGIVWEPKAGVAILTFPGVPAEMRAMWAETAVPFLRLRGGGQEIFHSRTLRHWGVSESTLAEKVEEFLRGVNPTVAPYAGNGEVKLRITARAAGIAAAESLIAPVEASLRTIAGLDCYGADEDTLASASAALLVRTGTTLAVAESCTGGMLAEALTALPGASRYLRGAVVAYANDLKTSLLGVDEQRMIDHGAVSEPVARAMAEGVRNRLASDWGLALTGVSGPGGGTAQKPVGLVHIALAGPGETRAVEIRLGAQRGRDWIRRVSTQSALDLLRREIINWEAFGIMKER.

It belongs to the CinA family.

In Gloeobacter violaceus (strain ATCC 29082 / PCC 7421), this protein is CinA-like protein.